The sequence spans 353 residues: uncharacterized protein (353 aa).

3 disordered regions span residues 1 to 24, 245 to 280, and 305 to 353; these read MSTS…QQSQ, NKSS…EKVP, and AAGK…DLNN. Residues 9–24 are compositionally biased toward low complexity; it reads NKKNNTKQQKYQQQSQ. Residues 254-280 are compositionally biased toward basic and acidic residues; the sequence is KSGDKSTVKSTDKQVEKKVEESSEKVP. Low complexity predominate over residues 321 to 332; the sequence is VTTSTSESTVEV. Acidic residues predominate over residues 342–353; it reads EPDEEVFEDLNN.

This is an uncharacterized protein from Acanthamoeba polyphaga mimivirus (APMV).